A 304-amino-acid polypeptide reads, in one-letter code: Ribonuclease Z (304 aa).

The Zn(2+) site is built by H64, H66, D68, H69, H141, D209, and H267. The Proton acceptor role is filled by D68.

Belongs to the RNase Z family. As to quaternary structure, homodimer. It depends on Zn(2+) as a cofactor.

The catalysed reaction is Endonucleolytic cleavage of RNA, removing extra 3' nucleotides from tRNA precursor, generating 3' termini of tRNAs. A 3'-hydroxy group is left at the tRNA terminus and a 5'-phosphoryl group is left at the trailer molecule.. Functionally, zinc phosphodiesterase, which displays some tRNA 3'-processing endonuclease activity. Probably involved in tRNA maturation, by removing a 3'-trailer from precursor tRNA. The protein is Ribonuclease Z of Thermoplasma volcanium (strain ATCC 51530 / DSM 4299 / JCM 9571 / NBRC 15438 / GSS1).